A 187-amino-acid polypeptide reads, in one-letter code: UPF0301 protein Pcryo_0062 (187 aa).

The protein belongs to the UPF0301 (AlgH) family.

The protein is UPF0301 protein Pcryo_0062 of Psychrobacter cryohalolentis (strain ATCC BAA-1226 / DSM 17306 / VKM B-2378 / K5).